The sequence spans 1012 residues: Retinoblastoma-related protein (1012 aa).

A domain A region spans residues 403 to 604 (TPVSTAMTTA…EKGSSMDNSL (202 aa)). Residues 403–863 (TPVSTAMTTA…NEVFIPSVKP (461 aa)) form a pocket region. Residues 605 to 723 (IIARPALSAG…PGGGGETCAE (119 aa)) are spacer. A domain B region spans residues 724–863 (TGINIFFSKI…NEVFIPSVKP (140 aa)). The disordered stretch occupies residues 884–905 (NNDKDGQCPGSPKLSTFPSLPD).

This sequence belongs to the retinoblastoma protein (RB) family.

It is found in the nucleus. In terms of biological role, regulator of biological processes that recruits a histone deacetylase to control gene transcription. May play a role in the entry into mitosis, negatively regulating the cell proliferation. Formation of stable complexes with geminiviridae replication-associated proteins may create a cellular environment which favors viral DNA replication. The chain is Retinoblastoma-related protein (RB) from Oxybasis rubra (Red goosefoot).